The primary structure comprises 65 residues: Large ribosomal subunit protein bL33c (65 aa).

It belongs to the bacterial ribosomal protein bL33 family.

It localises to the plastid. Its subcellular location is the chloroplast. In Marchantia polymorpha (Common liverwort), this protein is Large ribosomal subunit protein bL33c (rpl33).